The following is a 75-amino-acid chain: uncharacterized protein (75 aa).

Residues 12-32 (LKVFILFTGFTALFYYAMIWV) form a helical membrane-spanning segment.

Its subcellular location is the cell membrane. This is an uncharacterized protein from Bacillus subtilis (strain 168).